Reading from the N-terminus, the 430-residue chain is Purine nucleoside phosphorylase LACC1 (430 aa).

An N6-acetyllysine modification is found at K247. Residues H250, C284, and H301 each contribute to the Zn(2+) site.

This sequence belongs to the purine nucleoside phosphorylase YfiH/LACC1 family. In terms of assembly, interacts with FASN. Interacts with SDHA. Interacts with ATF6, EIF2AK3 and ERN1. Phosphorylated on tyrosine residues. Ubiquitously expressed, with higher expression levels in immune-related tissues such as lymph nodes and spleen. Expressed in both intestinal and peripheral myeloid-derived cells.

Its subcellular location is the cytoplasm. The protein resides in the nucleus. The protein localises to the endoplasmic reticulum. It is found in the peroxisome. The catalysed reaction is adenosine + phosphate = alpha-D-ribose 1-phosphate + adenine. It catalyses the reaction inosine + phosphate = alpha-D-ribose 1-phosphate + hypoxanthine. The enzyme catalyses guanosine + phosphate = alpha-D-ribose 1-phosphate + guanine. It carries out the reaction S-methyl-5'-thioadenosine + phosphate = 5-(methylsulfanyl)-alpha-D-ribose 1-phosphate + adenine. The catalysed reaction is adenosine + H2O + H(+) = inosine + NH4(+). Functionally, purine nucleoside enzyme that catalyzes the phosphorolysis of adenosine, guanosine and inosine nucleosides, yielding D-ribose 1-phosphate and the respective free bases, adenine, guanine and hypoxanthine. Also catalyzes the phosphorolysis of S-methyl-5'-thioadenosine into adenine and S-methyl-5-thio-alpha-D-ribose 1-phosphate. Also has adenosine deaminase activity. Acts as a regulator of innate immunity in macrophages by modulating the purine nucleotide metabolism, thereby regulating the metabolic function and bioenergetic state of macrophages. Enables a purine nucleotide cycle between adenosine and inosine monophosphate and adenylosuccinate that prevents cytoplasmic acidification and balances the cytoplasmic-mitochondrial redox interface. The purine nucleotide cycle consumes aspartate and releases fumarate in a manner involving fatty acid oxidation and ATP-citrate lyase activity. Participates in pattern recognition receptor (PRR)-induced cytokines in macrophages: associates with the NOD2-signaling complex and promotes optimal NOD2-induced signaling, cytokine secretion and bacterial clearance. Localizes to the endoplasmic reticulum upon PRR stimulation of macrophages and associates with endoplasmic reticulum-stress sensors, promoting the endoplasmic reticulum unfolded protein response (UPR). Does not show laccase activity. The protein is Purine nucleoside phosphorylase LACC1 of Homo sapiens (Human).